An 82-amino-acid chain; its full sequence is Omega-conotoxin-like TxMKLT1-031 (82 aa).

The signal sequence occupies residues M1–A22. Residues D23 to E49 constitute a propeptide that is removed on maturation. 3 cysteine pairs are disulfide-bonded: C53-C71, C60-C76, and C70-C81.

Belongs to the conotoxin O1 superfamily. In terms of tissue distribution, expressed by the venom duct.

Its subcellular location is the secreted. Functionally, omega-conotoxins act at presynaptic membranes, they bind and block voltage-gated calcium channels (Cav). This is Omega-conotoxin-like TxMKLT1-031 from Conus textile (Cloth-of-gold cone).